The sequence spans 774 residues: C6 finger domain transcription factor nscR (774 aa).

The segment at residues 17-43 is a DNA-binding region (zn(2)-C6 fungal-type); that stretch reads CELCRERKIKCDKVDPCNNCVSAGVVC. Disordered stretches follow at residues 61-94, 536-559, and 665-697; these read RPMS…SGAV, LQLP…PQEH, and PTFS…SDLS. The segment covering 67 to 78 has biased composition (pro residues); that stretch reads FVPPRAPTPVAG. Residues 536 to 548 are compositionally biased toward low complexity; the sequence is LQLPQPSNGSSQP. The span at 665–674 shows a compositional bias: polar residues; the sequence is PTFSLGSSTG. Over residues 675–697 the composition is skewed to low complexity; sequence TSAAPTPRSRASSTPSDTLSDLS.

Its subcellular location is the nucleus. In terms of biological role, transcription factor that specifically regulates the neosartoricin biosynthesis gene cluster. The polypeptide is C6 finger domain transcription factor nscR (Aspergillus fumigatus (strain ATCC MYA-4609 / CBS 101355 / FGSC A1100 / Af293) (Neosartorya fumigata)).